We begin with the raw amino-acid sequence, 56 residues long: UPF0291 protein Clos_1191 (56 aa).

This sequence belongs to the UPF0291 family.

Its subcellular location is the cytoplasm. This Alkaliphilus oremlandii (strain OhILAs) (Clostridium oremlandii (strain OhILAs)) protein is UPF0291 protein Clos_1191.